The following is a 301-amino-acid chain: Probable porphobilinogen deaminase (301 aa).

The residue at position 241 (Cys241) is an S-(dipyrrolylmethanemethyl)cysteine.

This sequence belongs to the HMBS family. The cofactor is dipyrromethane.

It carries out the reaction 4 porphobilinogen + H2O = hydroxymethylbilane + 4 NH4(+). It participates in porphyrin-containing compound metabolism; protoporphyrin-IX biosynthesis; coproporphyrinogen-III from 5-aminolevulinate: step 2/4. In terms of biological role, tetrapolymerization of the monopyrrole PBG into the hydroxymethylbilane pre-uroporphyrinogen in several discrete steps. The sequence is that of Probable porphobilinogen deaminase from Pyrobaculum islandicum (strain DSM 4184 / JCM 9189 / GEO3).